Consider the following 622-residue polypeptide: uncharacterized protein (622 aa).

Residues 157-166 are compositionally biased toward basic and acidic residues; it reads LKESPLRDQQ. The tract at residues 157–238 is disordered; the sequence is LKESPLRDQQ…GLPDHNSISE (82 aa).

This is an uncharacterized protein from Homo sapiens (Human).